Here is a 311-residue protein sequence, read N- to C-terminus: MGRPSRRGRDIDGIVLLDKPLGLSSNDLLQKVKRLFRANKAGHTGALDPLATGMLPVCLGEATKFSQHLLDADKRYRVIARLGERTDTSDAEGQTVSVRPVSLDKTRLEAALDHFRGESSQVPSMFSALKHQGRPLYEYARKGITVEREARPIHVYDLQLHRWDLTKVELEIHCSKGTYIRTIIDDLGERLGCGAHVMALRRLAVARYPIERMVTLAALQAIAADAPPDTLAQLDALLLPMDSAVADMPLVNLPSDLAARLRLGQTVAVTAQPQAGLVRLTEGDAGRFFGIGEIAAPGRLTPRRLIAEPRA.

His43 serves as a coordination point for substrate. The active-site Nucleophile is the Asp48. Substrate contacts are provided by Tyr76, Tyr179, and Leu200.

This sequence belongs to the pseudouridine synthase TruB family. Type 1 subfamily.

It carries out the reaction uridine(55) in tRNA = pseudouridine(55) in tRNA. Its function is as follows. Responsible for synthesis of pseudouridine from uracil-55 in the psi GC loop of transfer RNAs. This Sodalis glossinidius (strain morsitans) protein is tRNA pseudouridine synthase B.